A 534-amino-acid polypeptide reads, in one-letter code: Ulvan lyase NLR42 (534 aa).

The signal sequence occupies residues M1–T47. A disulfide bridge links C59 with C89. Ca(2+)-binding residues include G63, N68, D86, T88, A91, and D92. Substrate is bound at residue Y164. The active-site Proton acceptor is K169. Substrate-binding positions include S218–R223 and Y288–K291. Residue Y288 is the Proton donor/acceptor of the active site. A ulvan-binding domain region spans residues P316–L449. The propeptide at S450–N534 is removed by the type IX secretion system (T9SS).

This sequence belongs to the polysaccharide lyase 28 family. Ca(2+) serves as cofactor.

Its subcellular location is the secreted. In terms of biological role, ulvan lyase involved in ulvan degradation. Ulvan is the main polysaccharide component of the Ulvales (green seaweed) cell wall. It is composed of disaccharide building blocks comprising 3-sulfated rhamnose (Rha3S) linked to D-glucuronic acid (GlcA), L-iduronic acid (IduA), or D-xylose (Xyl). Ulvan lyase catalyzes the endolytic cleavage of the glycosidic bond between Rha3S and the uronic acids GlcA or IduA, producing oligosaccharides that have unsaturated 4-deoxy-L-threo-hex-4-enopyranosiduronic acid (deltaUA) at the non-reducing end. This results eventually in the degradation of the ulvan polysaccharide into deltaUA-Rha3S disaccharides and deltaUA-Rha3S-Xyl-Rha3S tetrasaccharides. This is Ulvan lyase NLR42 from Nonlabens ulvanivorans (Persicivirga ulvanivorans).